Here is a 156-residue protein sequence, read N- to C-terminus: SsrA-binding protein (156 aa).

This sequence belongs to the SmpB family.

Its subcellular location is the cytoplasm. Required for rescue of stalled ribosomes mediated by trans-translation. Binds to transfer-messenger RNA (tmRNA), required for stable association of tmRNA with ribosomes. tmRNA and SmpB together mimic tRNA shape, replacing the anticodon stem-loop with SmpB. tmRNA is encoded by the ssrA gene; the 2 termini fold to resemble tRNA(Ala) and it encodes a 'tag peptide', a short internal open reading frame. During trans-translation Ala-aminoacylated tmRNA acts like a tRNA, entering the A-site of stalled ribosomes, displacing the stalled mRNA. The ribosome then switches to translate the ORF on the tmRNA; the nascent peptide is terminated with the 'tag peptide' encoded by the tmRNA and targeted for degradation. The ribosome is freed to recommence translation, which seems to be the essential function of trans-translation. The protein is SsrA-binding protein of Clostridium tetani (strain Massachusetts / E88).